A 531-amino-acid polypeptide reads, in one-letter code: MVKAVTSSKETAKVEKKKSAPRSGVKKAVSKSQAGVKDSSSPVHKSSKKAPLAEAAVGVIKQVIGAVVDVQFEGPLPNILNALETDNLGNRLVLEVAQHLGENTVRTIAMDTTDGLVRGQKVFDTGTQISVPVGEATLGRIMNVIGEPVDNVGPIATSKTRSIHQEAPEYVEQSTASEILVTGIKVVDLLAPYSKGGKVGLFGGAGVGKTVLIMELINNIAKAHGGYSVFAGVGERTREGNDLYYEMIESRVNVNPKDNNGSTEGSKCALVYGQMNEPPGARARVALSGLTIAESFRDEGQDVLFFVDNIFRFTQAGAEVSALLGRIPSAVGYQPTLATDMGALQERITSTRTGSITSVQAIYVPADDLTDPAPATSFAHLDATTVLSRSIAEKGIYPAVDPLDSFSRMLDPLIVGEEHYTVACQVQTILQRYRSLQDIIAILGMDELSEDDKLLVGRARKIERFLSQPFHVAEAFTGSPGKLVPLEETIKGFKGLCAGEYDNLPEAAFYMVGSIDEAVEKGKRLIAEVSS.

The interval 1–48 (MVKAVTSSKETAKVEKKKSAPRSGVKKAVSKSQAGVKDSSSPVHKSSK) is disordered. Positions 19–29 (SAPRSGVKKAV) are enriched in basic residues. Polar residues predominate over residues 30–44 (SKSQAGVKDSSSPVH). 203–210 (GGAGVGKT) is an ATP binding site.

The protein belongs to the ATPase alpha/beta chains family. In terms of assembly, F-type ATPases have 2 components, CF(1) - the catalytic core - and CF(0) - the membrane proton channel. CF(1) has five subunits: alpha(3), beta(3), gamma(1), delta(1), epsilon(1). CF(0) has three main subunits: a(1), b(2) and c(9-12). The alpha and beta chains form an alternating ring which encloses part of the gamma chain. CF(1) is attached to CF(0) by a central stalk formed by the gamma and epsilon chains, while a peripheral stalk is formed by the delta and b chains.

The protein resides in the cell inner membrane. It carries out the reaction ATP + H2O + 4 H(+)(in) = ADP + phosphate + 5 H(+)(out). Functionally, produces ATP from ADP in the presence of a proton gradient across the membrane. The catalytic sites are hosted primarily by the beta subunits. This is ATP synthase subunit beta from Bartonella henselae (strain ATCC 49882 / DSM 28221 / CCUG 30454 / Houston 1) (Rochalimaea henselae).